The sequence spans 474 residues: tRNA-2-methylthio-N(6)-dimethylallyladenosine synthase (474 aa).

An MTTase N-terminal domain is found at 3–120 (KKLHIKTWGC…LPEMIDQVQR (118 aa)). Residues C12, C49, C83, C157, C161, and C164 each contribute to the [4Fe-4S] cluster site. In terms of domain architecture, Radical SAM core spans 143–375 (RADGPTAFVS…QDRITQQAMR (233 aa)). The region spanning 378–441 (RQMLGTVQRI…TNSLRGIFIR (64 aa)) is the TRAM domain.

Belongs to the methylthiotransferase family. MiaB subfamily. In terms of assembly, monomer. [4Fe-4S] cluster is required as a cofactor.

It localises to the cytoplasm. The catalysed reaction is N(6)-dimethylallyladenosine(37) in tRNA + (sulfur carrier)-SH + AH2 + 2 S-adenosyl-L-methionine = 2-methylsulfanyl-N(6)-dimethylallyladenosine(37) in tRNA + (sulfur carrier)-H + 5'-deoxyadenosine + L-methionine + A + S-adenosyl-L-homocysteine + 2 H(+). In terms of biological role, catalyzes the methylthiolation of N6-(dimethylallyl)adenosine (i(6)A), leading to the formation of 2-methylthio-N6-(dimethylallyl)adenosine (ms(2)i(6)A) at position 37 in tRNAs that read codons beginning with uridine. This is tRNA-2-methylthio-N(6)-dimethylallyladenosine synthase from Shewanella denitrificans (strain OS217 / ATCC BAA-1090 / DSM 15013).